A 372-amino-acid chain; its full sequence is Protein-glutamate methylesterase/protein-glutamine glutaminase 1 (372 aa).

Residues 4–121 (KVLVVDDSSF…ATNKDDAILL (118 aa)) enclose the Response regulatory domain. The residue at position 55 (Asp-55) is a 4-aspartylphosphate. The interval 138–174 (VVRPTTPTPPPRSSASSVLGGVSTHTQPAPVRSSHAA) is disordered. A CheB-type methylesterase domain is found at 179–372 (SGKQYKLLLI…ESILKESARG (194 aa)). Residues Ser-191, His-218, and Asp-314 contribute to the active site.

It belongs to the CheB family. Phosphorylated by CheA. Phosphorylation of the N-terminal regulatory domain activates the methylesterase activity.

It is found in the cytoplasm. It carries out the reaction [protein]-L-glutamate 5-O-methyl ester + H2O = L-glutamyl-[protein] + methanol + H(+). It catalyses the reaction L-glutaminyl-[protein] + H2O = L-glutamyl-[protein] + NH4(+). In terms of biological role, involved in chemotaxis. Part of a chemotaxis signal transduction system that modulates chemotaxis in response to various stimuli. Catalyzes the demethylation of specific methylglutamate residues introduced into the chemoreceptors (methyl-accepting chemotaxis proteins or MCP) by CheR. Also mediates the irreversible deamidation of specific glutamine residues to glutamic acid. In Shewanella sp. (strain MR-4), this protein is Protein-glutamate methylesterase/protein-glutamine glutaminase 1.